Here is a 225-residue protein sequence, read N- to C-terminus: 7-cyano-7-deazaguanine synthase (225 aa).

Phe10–Ala20 provides a ligand contact to ATP. Zn(2+) contacts are provided by Cys190, Cys205, Cys208, and Cys211.

Belongs to the QueC family. Requires Zn(2+) as cofactor.

It catalyses the reaction 7-carboxy-7-deazaguanine + NH4(+) + ATP = 7-cyano-7-deazaguanine + ADP + phosphate + H2O + H(+). It participates in purine metabolism; 7-cyano-7-deazaguanine biosynthesis. Functionally, catalyzes the ATP-dependent conversion of 7-carboxy-7-deazaguanine (CDG) to 7-cyano-7-deazaguanine (preQ(0)). The sequence is that of 7-cyano-7-deazaguanine synthase from Helicobacter acinonychis (strain Sheeba).